A 191-amino-acid polypeptide reads, in one-letter code: Xanthine phosphoribosyltransferase (191 aa).

2 residues coordinate xanthine: leucine 20 and asparagine 27. 128–132 contributes to the 5-phospho-alpha-D-ribose 1-diphosphate binding site; it reads ANGQA. Position 156 (lysine 156) interacts with xanthine.

It belongs to the purine/pyrimidine phosphoribosyltransferase family. Xpt subfamily. Homodimer.

It localises to the cytoplasm. It catalyses the reaction XMP + diphosphate = xanthine + 5-phospho-alpha-D-ribose 1-diphosphate. The protein operates within purine metabolism; XMP biosynthesis via salvage pathway; XMP from xanthine: step 1/1. Its function is as follows. Converts the preformed base xanthine, a product of nucleic acid breakdown, to xanthosine 5'-monophosphate (XMP), so it can be reused for RNA or DNA synthesis. The protein is Xanthine phosphoribosyltransferase of Acinetobacter baylyi (strain ATCC 33305 / BD413 / ADP1).